A 191-amino-acid polypeptide reads, in one-letter code: Pyridoxal 5'-phosphate synthase subunit PdxT (191 aa).

46–48 (GES) is a binding site for L-glutamine. The Nucleophile role is filled by Cys78. L-glutamine is bound by residues Arg105 and 133-134 (IR). Residues His169 and Glu171 each act as charge relay system in the active site.

The protein belongs to the glutaminase PdxT/SNO family. In terms of assembly, in the presence of PdxS, forms a dodecamer of heterodimers. Only shows activity in the heterodimer.

The enzyme catalyses aldehydo-D-ribose 5-phosphate + D-glyceraldehyde 3-phosphate + L-glutamine = pyridoxal 5'-phosphate + L-glutamate + phosphate + 3 H2O + H(+). It catalyses the reaction L-glutamine + H2O = L-glutamate + NH4(+). It functions in the pathway cofactor biosynthesis; pyridoxal 5'-phosphate biosynthesis. Catalyzes the hydrolysis of glutamine to glutamate and ammonia as part of the biosynthesis of pyridoxal 5'-phosphate. The resulting ammonia molecule is channeled to the active site of PdxS. The protein is Pyridoxal 5'-phosphate synthase subunit PdxT of Brevibacillus brevis (strain 47 / JCM 6285 / NBRC 100599).